Reading from the N-terminus, the 780-residue chain is RNA-binding protein Pasilla (780 aa).

3 disordered regions span residues 31–50 (LQHQNQHNSSPQQPQHQQLE), 76–113 (QPRHSTTTSSPSSTHSLASGGGSSSNSSNSSSSDSSSI), and 150–190 (QIES…ATAS). 3 stretches are compositionally biased toward low complexity: residues 79–91 (HSTTTSSPSSTHS), 99–113 (SSNSSNSSSSDSSSI), and 176–190 (PNGTPGAQTPTATAS). KH domains follow at residues 273–340 (TYHM…MEFI), 366–432 (DKQV…CKMI), and 691–758 (KDSK…QYLI). The disordered stretch occupies residues 674–693 (AQLGGLSKSPTPGDLSSKDS). Residues 686 to 776 (GDLSSKDSKN…TKRARQIPLT (91 aa)) form a required for RNA binding region.

In terms of tissue distribution, expressed in the central nervous system in mushroom body neurons (at protein level).

It is found in the nucleus. It localises to the cytoplasm. Functions to regulate alternative splicing in neurons by binding pre-mRNA in a sequence-specific manner to activate exon inclusion. Plays a role in long-term memory formation by processing the unspliced Orb2-isoform A (Orb2A) mRNA and thereby controlling Orb2A protein abundance. The polypeptide is RNA-binding protein Pasilla (Drosophila melanogaster (Fruit fly)).